The chain runs to 262 residues: 3-methyl-2-oxobutanoate hydroxymethyltransferase (262 aa).

The Mg(2+) site is built by aspartate 44 and aspartate 83. Residues 44 to 45, aspartate 83, and lysine 112 contribute to the 3-methyl-2-oxobutanoate site; that span reads DS. Mg(2+) is bound at residue glutamate 114. Glutamate 180 acts as the Proton acceptor in catalysis.

Belongs to the PanB family. As to quaternary structure, homodecamer; pentamer of dimers. The cofactor is Mg(2+).

It is found in the cytoplasm. The enzyme catalyses 3-methyl-2-oxobutanoate + (6R)-5,10-methylene-5,6,7,8-tetrahydrofolate + H2O = 2-dehydropantoate + (6S)-5,6,7,8-tetrahydrofolate. Its pathway is cofactor biosynthesis; (R)-pantothenate biosynthesis; (R)-pantoate from 3-methyl-2-oxobutanoate: step 1/2. Its function is as follows. Catalyzes the reversible reaction in which hydroxymethyl group from 5,10-methylenetetrahydrofolate is transferred onto alpha-ketoisovalerate to form ketopantoate. This is 3-methyl-2-oxobutanoate hydroxymethyltransferase from Chromobacterium violaceum (strain ATCC 12472 / DSM 30191 / JCM 1249 / CCUG 213 / NBRC 12614 / NCIMB 9131 / NCTC 9757 / MK).